An 89-amino-acid chain; its full sequence is Small ribosomal subunit protein uS14A (89 aa).

The protein belongs to the universal ribosomal protein uS14 family. In terms of assembly, part of the 30S ribosomal subunit. Contacts proteins S3 and S10.

In terms of biological role, binds 16S rRNA, required for the assembly of 30S particles and may also be responsible for determining the conformation of the 16S rRNA at the A site. The chain is Small ribosomal subunit protein uS14A from Lacticaseibacillus paracasei (strain ATCC 334 / BCRC 17002 / CCUG 31169 / CIP 107868 / KCTC 3260 / NRRL B-441) (Lactobacillus paracasei).